A 476-amino-acid chain; its full sequence is Glycogen synthase (476 aa).

Residue Lys15 coordinates ADP-alpha-D-glucose.

It belongs to the glycosyltransferase 1 family. Bacterial/plant glycogen synthase subfamily.

The enzyme catalyses [(1-&gt;4)-alpha-D-glucosyl](n) + ADP-alpha-D-glucose = [(1-&gt;4)-alpha-D-glucosyl](n+1) + ADP + H(+). It functions in the pathway glycan biosynthesis; glycogen biosynthesis. In terms of biological role, synthesizes alpha-1,4-glucan chains using ADP-glucose. This is Glycogen synthase (glgA) from Haemophilus influenzae (strain ATCC 51907 / DSM 11121 / KW20 / Rd).